The following is a 54-amino-acid chain: Large ribosomal subunit protein bL33A (54 aa).

It belongs to the bacterial ribosomal protein bL33 family.

The sequence is that of Large ribosomal subunit protein bL33A from Streptomyces griseus subsp. griseus (strain JCM 4626 / CBS 651.72 / NBRC 13350 / KCC S-0626 / ISP 5235).